A 520-amino-acid chain; its full sequence is Polycomb protein PHO (520 aa).

4 C2H2-type zinc fingers span residues 357 to 381 (IACP…LHTH), 386 to 408 (HVCA…QLVH), 414 to 438 (FQCT…VRIH), and 444 to 468 (FVCP…ILTH). The interval 475-497 (TSISGKSGCSNAESNSQSEDTSA) is disordered.

Component of the Esc/E(z) complex, composed of Esc, E(z), Su(z)12, HDAC1/Rpd3 and Caf1-55. This complex is distinct from the PRC1 complex, which contains many other PcG proteins like Pc, Ph, Psc, Su(z)2. The two complexes however cooperate and interact together during the first 3 hours of development to establish PcG silencing. Component of the chromatin remodeling Ino80 complex. Interacts with Sfmbt to form a pho-repressive complex (PhoRC).

The protein resides in the nucleus. Functionally, polycomb group (PcG) protein that binds to the 5'-CNGCCATNNNNG-3' sequence found in the regulatory regions of many genes. PcG proteins act by forming multiprotein complexes, which are required to maintain the transcriptionally repressive state of homeotic genes throughout development. PcG proteins are not required to initiate repression, but to maintain it during later stages of development. They probably act via the methylation of histones, rendering chromatin heritably changed in its expressibility. Probably targets the Esc/E(z) complex to DNA. Necessary but not sufficient to recruit a functional PcG repressive complex that represses target genes, suggesting that the recruitment of the distinct PRC1 complex is also required to allow a subsequent repression. Its function is as follows. Proposed core component of the chromatin remodeling Ino80 complex which is involved in transcriptional regulation, DNA replication and probably DNA repair. This chain is Polycomb protein PHO (pho), found in Drosophila melanogaster (Fruit fly).